Reading from the N-terminus, the 225-residue chain is Glucose-induced degradation protein 8 homolog (225 aa).

Positions 22–54 constitute a LisH domain; that stretch reads QRAEMNRLIMDYLVTEGYKEAAEKFRIESGTQP. The 58-residue stretch at 60 to 117 folds into the CTLH domain; it reads SLDDRIKIREAVQKGDLEQAVSMTNKLNPDILDSNQQLYFHLQQQRLIELIREKDIEA.

It belongs to the GID8 family.

It localises to the cytoplasm. It is found in the nucleus. In terms of biological role, core component of the CTLH E3 ubiquitin-protein ligase complex that mediates ubiquitination and subsequent proteasomal degradation of target proteins. Acts as a positive regulator of Wnt signaling pathway by promoting beta-catenin (CTNNB1) nuclear accumulation. This chain is Glucose-induced degradation protein 8 homolog, found in Nematostella vectensis (Starlet sea anemone).